Here is a 284-residue protein sequence, read N- to C-terminus: NAD kinase (284 aa).

Catalysis depends on Asp-60, which acts as the Proton acceptor. Residues 60–61, 134–135, Lys-145, Arg-162, Asp-164, and Gln-235 each bind NAD(+); these read DG and ND.

Belongs to the NAD kinase family. It depends on a divalent metal cation as a cofactor.

The protein localises to the cytoplasm. The catalysed reaction is NAD(+) + ATP = ADP + NADP(+) + H(+). Its function is as follows. Involved in the regulation of the intracellular balance of NAD and NADP, and is a key enzyme in the biosynthesis of NADP. Catalyzes specifically the phosphorylation on 2'-hydroxyl of the adenosine moiety of NAD to yield NADP. The sequence is that of NAD kinase from Treponema denticola (strain ATCC 35405 / DSM 14222 / CIP 103919 / JCM 8153 / KCTC 15104).